We begin with the raw amino-acid sequence, 564 residues long: Dihydroxy-acid dehydratase (564 aa).

Aspartate 80 contributes to the Mg(2+) binding site. Residue cysteine 121 coordinates [2Fe-2S] cluster. Mg(2+) contacts are provided by aspartate 122 and lysine 123. At lysine 123 the chain carries N6-carboxylysine. Cysteine 194 provides a ligand contact to [2Fe-2S] cluster. Glutamate 447 serves as a coordination point for Mg(2+). The active-site Proton acceptor is serine 473.

The protein belongs to the IlvD/Edd family. As to quaternary structure, homodimer. [2Fe-2S] cluster serves as cofactor. Mg(2+) is required as a cofactor.

The enzyme catalyses (2R)-2,3-dihydroxy-3-methylbutanoate = 3-methyl-2-oxobutanoate + H2O. The catalysed reaction is (2R,3R)-2,3-dihydroxy-3-methylpentanoate = (S)-3-methyl-2-oxopentanoate + H2O. It functions in the pathway amino-acid biosynthesis; L-isoleucine biosynthesis; L-isoleucine from 2-oxobutanoate: step 3/4. The protein operates within amino-acid biosynthesis; L-valine biosynthesis; L-valine from pyruvate: step 3/4. Functionally, functions in the biosynthesis of branched-chain amino acids. Catalyzes the dehydration of (2R,3R)-2,3-dihydroxy-3-methylpentanoate (2,3-dihydroxy-3-methylvalerate) into 2-oxo-3-methylpentanoate (2-oxo-3-methylvalerate) and of (2R)-2,3-dihydroxy-3-methylbutanoate (2,3-dihydroxyisovalerate) into 2-oxo-3-methylbutanoate (2-oxoisovalerate), the penultimate precursor to L-isoleucine and L-valine, respectively. The protein is Dihydroxy-acid dehydratase of Listeria monocytogenes serotype 4a (strain HCC23).